The primary structure comprises 347 residues: Protease HtpX homolog (347 aa).

4 helical membrane passes run 8–28 (VALG…ATIA), 44–64 (AMAL…YLFV), 76–96 (LSFL…TYFA), and 141–163 (AFAY…LALT). His-174 is a binding site for Zn(2+). Residue Glu-175 is part of the active site. Position 178 (His-178) interacts with Zn(2+). Transmembrane regions (helical) follow at residues 185–205 (AIML…VTAV) and 221–241 (ILAA…LLVL). Glu-248 is a binding site for Zn(2+).

It belongs to the peptidase M48B family. Zn(2+) serves as cofactor.

It localises to the cell membrane. The polypeptide is Protease HtpX homolog (Pyrobaculum aerophilum (strain ATCC 51768 / DSM 7523 / JCM 9630 / CIP 104966 / NBRC 100827 / IM2)).